The following is a 353-amino-acid chain: uncharacterized protein (353 aa).

This is an uncharacterized protein from Caenorhabditis elegans.